The chain runs to 159 residues: Putative transmembrane protein ORF159 (159 aa).

2 helical membrane-spanning segments follow: residues 20 to 40 and 59 to 79; these read LLLS…LSLF and IIAV…GFCC. The short motif at 106–108 is the Cell attachment site element; that stretch reads RGD.

The protein resides in the host membrane. In Acidianus sp. F28 (AFV-2), this protein is Putative transmembrane protein ORF159.